A 143-amino-acid chain; its full sequence is MIRKSKKITKQRGSRTCGYGEAKKHRGAGHRGGRGNAGHQKHKWLSVCKFNPEYFGKYGFNRNPCLIKKLETINVGELEEYVLKYKDAFKLKDGKVVVNATEIGFEKILGKGRISTAMVVKAVEFSEGAKEKIEAAGGEFVEL.

2 stretches are compositionally biased toward basic residues: residues 1–13 (MIRK…KQRG) and 23–38 (KKHR…GNAG). Residues 1-38 (MIRKSKKITKQRGSRTCGYGEAKKHRGAGHRGGRGNAG) form a disordered region.

It belongs to the universal ribosomal protein uL15 family. As to quaternary structure, part of the 50S ribosomal subunit.

Functionally, binds to the 23S rRNA. This chain is Large ribosomal subunit protein uL15, found in Methanococcus vannielii.